A 503-amino-acid chain; its full sequence is ESX-5 secretion system protein EccD5 (503 aa).

The next 11 membrane-spanning stretches (helical) occupy residues 137-157, 169-189, 200-220, 224-244, 250-270, 272-292, 359-379, 382-402, 413-433, 439-459, and 480-500; these read IVAV…ATGV, LTTI…MLLL, VADI…AAAP, VGSP…ALAL, RLGI…AALA, MVAA…CVVA, FLSG…TSLC, HTGQ…FLLL, SITL…RYAL, LAVS…MAAA, and YLCL…YAAI.

The protein belongs to the EccD/Snm4 family. As to quaternary structure, part of the ESX-5 / type VII secretion system (T7SS), which is composed of cytosolic and membrane components. The ESX-5 membrane complex is composed of EccB5, EccC5, EccD5 and EccE5.

It localises to the cell inner membrane. Its function is as follows. Part of the ESX-5 specialized secretion system, which is responsible for the secretion of EsxN and a number of PE_PGRS and PPE proteins, including PPE41. In Mycobacterium tuberculosis (strain CDC 1551 / Oshkosh), this protein is ESX-5 secretion system protein EccD5.